A 1057-amino-acid polypeptide reads, in one-letter code: MENILNFNEPLDINLLDQIVSVLYNPLSNKNDIKAAQMVLGKFQEHPDAWSKVDTILETSKIVQTKFIALVIMDSLIKYRWKSLPREQCEGIKNYIVSLIIRLSSDPQTSSREKLLVNKLNLVFVQILKQEWTTNWSTFIPEIISSSKTNESLCENNMVILRLLSEEIFNFSEEQMTQTKIQTLKITFEKEFSLINDLCFYILENATRASLIKATLETLQRFLNWVPLHYIIEVNGGIAEPSKLVKLLLHKYFPEPLFRNSTLKCLTEIGNLNLGNQQYDAVFIAIIDKFMNQIKFIKPDPSKIPQDYEDGDQGERSFIHTVSLFLTGFFKSHLKIMENSLNIPYLTLAHEILVNISNIDELELFKICLEYWNFLSSNLYSDIATFTTTLLSTPPRLQLYKSVLSKVRVVLIDHMAKPEEVIVVEDENGNIVRETTKDTDSLTLYESMRETLIFLTHLDSENTQHIMLEKLQTLISGREFTFQRLNTLCWAIGSISGAQNKEQEKRFLVTVIKDLLELCQNKKGKDNKAVIASDIMYIVGQYPRFLKDHWKFLKTVVNKLFEFMHESHPGVQDMACDTFLKISKQCKRKFVVLQVEESQPFINELLNQLSTTIAHLEQSQIHTFYEAVGYMIASSSDAAFREKLVNKFMELPNHSWLQIMGAASVKVESLLTVEVARDILNLIKTNNRAAMSLENCYITQISKIYLDLLNVYRTYSDHISRNPNIYRETLGQAMRSVKKETLKLLETFIEKSSDKQVIYSNFLQPLLEAVLGDYRTNIPETRDPEVLSLMTAIITSLKQLVHPEVPKILEAVFETTLSMITKNFEDYPYHRINFFNLIRAINSNAFTVFHNLHPQQFKLLIDCVVWAFKHTERNISETGLHILKELIENVSKNSDVANVFFKTYLVSLLNDILYILTDSFHKSGFALECDILRMMFQVVENGVVKIPLFDPQQANFPSNSEYVKEIVVTFLSASPNVSRPQIQAFVTRLFNLANINNNDFKSATRDFLITLKEWKSHENADLYSDEKNIEKALALKKQSMIPGMVRPNDVNLEMNDL.

In terms of domain architecture, Importin N-terminal spans 36–102 (AQMVLGKFQE…KNYIVSLIIR (67 aa)). 11 HEAT repeats span residues 239-275 (AEPS…LNLG), 281-321 (AVFI…FIHT), 462-501 (NTQH…AQNK), 506-544 (RFLV…QYPR), 551-588 (KFLK…QCKR), 596-633 (EESQ…YMIA), 739-776 (KETL…DYRT), 781-818 (TRDP…TTLS), 855-892 (QQFK…NVSK), 902-925 (KTYL…KSGF), and 926-965 (ALEC…YVKE).

It belongs to the exportin family. In terms of assembly, component of a nuclear export receptor complex.

Its subcellular location is the nucleus. It is found in the cytoplasm. The protein resides in the perinuclear region. Its function is as follows. Mediates the nuclear export of cellular proteins (cargos) bearing a leucine-rich nuclear export signal (NES). The chain is Exportin-1 (xpo1) from Dictyostelium discoideum (Social amoeba).